We begin with the raw amino-acid sequence, 217 residues long: Ribonuclease T (217 aa).

Positions 20-195 constitute an Exonuclease domain; sequence VVVDVETAGL…YDTERTAMLF (176 aa). Residues Asp-23, Glu-25, His-182, and Asp-187 each contribute to the Mg(2+) site. Catalysis depends on His-182, which acts as the Proton donor/acceptor.

It belongs to the RNase T family. In terms of assembly, homodimer. It depends on Mg(2+) as a cofactor.

Trims short 3' overhangs of a variety of RNA species, leaving a one or two nucleotide 3' overhang. Responsible for the end-turnover of tRNA: specifically removes the terminal AMP residue from uncharged tRNA (tRNA-C-C-A). Also appears to be involved in tRNA biosynthesis. In Blochmanniella pennsylvanica (strain BPEN), this protein is Ribonuclease T.